Here is a 245-residue protein sequence, read N- to C-terminus: tRNA pseudouridine synthase A (245 aa).

Catalysis depends on aspartate 52, which acts as the Nucleophile. Tyrosine 111 contributes to the substrate binding site.

This sequence belongs to the tRNA pseudouridine synthase TruA family. Homodimer.

It carries out the reaction uridine(38/39/40) in tRNA = pseudouridine(38/39/40) in tRNA. In terms of biological role, formation of pseudouridine at positions 38, 39 and 40 in the anticodon stem and loop of transfer RNAs. The protein is tRNA pseudouridine synthase A of Rickettsia felis (strain ATCC VR-1525 / URRWXCal2) (Rickettsia azadi).